The sequence spans 471 residues: Putative multidrug resistance protein MdtD (471 aa).

The Periplasmic portion of the chain corresponds to 1–11 (MTDLPDSTRWQ). The helical transmembrane segment at 12-32 (LWIVAFGFFMQSLDTTIVNTA) threads the bilayer. Residues 33–48 (LPSMAQSLGESPLHMH) lie on the Cytoplasmic side of the membrane. Residues 49–69 (MVIVSYVLTVAVMLPASGWLA) traverse the membrane as a helical segment. Topologically, residues 70 to 76 (DKVGVRN) are periplasmic. The chain crosses the membrane as a helical span at residues 77-97 (IFFTAIVLFTLGSLFCALSGT). The Cytoplasmic portion of the chain corresponds to 98–101 (LNEL). A helical transmembrane segment spans residues 102-124 (LLARALQGVGGAMMVPVGRLTVM). At 125-137 (KIVPREQYMAAMT) the chain is on the periplasmic side. Residues 138-158 (FVTLPGQVGPLLGPALGGLLV) traverse the membrane as a helical segment. The Cytoplasmic portion of the chain corresponds to 159 to 164 (EYASWH). The chain crosses the membrane as a helical span at residues 165–185 (WIFLINIPVGIIGAIATLMLM). The Periplasmic segment spans residues 186 to 196 (PNYTMQTRRFD). The helical transmembrane segment at 197-217 (LSGFLLLAVGMAVLTLALDGS) threads the bilayer. The Cytoplasmic portion of the chain corresponds to 218–224 (KGTGLSP). A helical membrane pass occupies residues 225–245 (LAITGLVAVGVVALVLYLLHA). At 246–262 (RNNHRALFSLKLFRTRT) the chain is on the periplasmic side. A helical transmembrane segment spans residues 263-283 (FSLGLAGSFAGRIGSGMLPFM). Over 284–285 (TP) the chain is Cytoplasmic. A helical transmembrane segment spans residues 286–306 (VFLQIGLGFSPFHAGLMMIPM). Residues 307 to 341 (VLGSMGMKRIVVQVVNRFGYRRVLVATTLGLSLVT) are Periplasmic-facing. Residues 342–362 (LLFMTTALLGWYYVLPFVLFL) traverse the membrane as a helical segment. The Cytoplasmic segment spans residues 363-395 (QGMVNSTRFSSMNTLTLKDLPDNLASSGNSLLS). The chain crosses the membrane as a helical span at residues 396–416 (MIMQLSMSIGVTIAGLLLGLF). Residues 417–430 (GSQHVSVDSGTTQT) are Periplasmic-facing. Residues 431–451 (VFMYTWLSMAFIIALPAFIFA) form a helical membrane-spanning segment. The Cytoplasmic segment spans residues 452 to 471 (RVPNDTHQNVAISRRKRSAQ).

Belongs to the major facilitator superfamily. TCR/Tet family.

Its subcellular location is the cell inner membrane. The sequence is that of Putative multidrug resistance protein MdtD from Escherichia coli O127:H6 (strain E2348/69 / EPEC).